The following is a 155-amino-acid chain: Endoribonuclease YbeY (155 aa).

Positions 117, 121, and 127 each coordinate Zn(2+).

Belongs to the endoribonuclease YbeY family. Zn(2+) serves as cofactor.

The protein resides in the cytoplasm. Its function is as follows. Single strand-specific metallo-endoribonuclease involved in late-stage 70S ribosome quality control and in maturation of the 3' terminus of the 16S rRNA. The protein is Endoribonuclease YbeY of Psychrobacter cryohalolentis (strain ATCC BAA-1226 / DSM 17306 / VKM B-2378 / K5).